Consider the following 70-residue polypeptide: DNA-directed RNA polymerase subunit omega (70 aa).

The protein belongs to the RNA polymerase subunit omega family. In terms of assembly, the RNAP catalytic core consists of 2 alpha, 1 beta, 1 beta' and 1 omega subunit. When a sigma factor is associated with the core the holoenzyme is formed, which can initiate transcription.

It carries out the reaction RNA(n) + a ribonucleoside 5'-triphosphate = RNA(n+1) + diphosphate. Promotes RNA polymerase assembly. Latches the N- and C-terminal regions of the beta' subunit thereby facilitating its interaction with the beta and alpha subunits. The chain is DNA-directed RNA polymerase subunit omega from Staphylococcus saprophyticus subsp. saprophyticus (strain ATCC 15305 / DSM 20229 / NCIMB 8711 / NCTC 7292 / S-41).